Here is a 311-residue protein sequence, read N- to C-terminus: Transcription initiation factor IIB (311 aa).

A TFIIB-type zinc finger spans residues 11–42 (KETKCPECGSTKLINDHERGEVVCGACGLVID). The Zn(2+) site is built by cysteine 15, cysteine 18, cysteine 34, and cysteine 37. 2 consecutive repeat copies span residues 128–211 (SELD…TREL) and 222–303 (DYVP…ELTE).

Belongs to the TFIIB family.

In terms of biological role, stabilizes TBP binding to an archaeal box-A promoter. Also responsible for recruiting RNA polymerase II to the pre-initiation complex (DNA-TBP-TFIIB). The polypeptide is Transcription initiation factor IIB (Methanosphaera stadtmanae (strain ATCC 43021 / DSM 3091 / JCM 11832 / MCB-3)).